The chain runs to 475 residues: ESX-3 secretion system protein EccD3 (475 aa).

The next 11 helical transmembrane spans lie at 132 to 152 (IARG…GLSV), 161 to 181 (LLGQ…ALAV), 186 to 206 (AVLA…AFAL), 212 to 232 (FGAP…LISM), 241 to 261 (IAVF…AGAA), 264 to 284 (WVIS…IVTV), 333 to 353 (GVIA…VSSA), 354 to 374 (NASP…ALRA), 384 to 404 (AWLL…FVIG), 409 to 429 (AALW…VAAL), and 453 to 473 (GLDA…SLVL).

The protein belongs to the EccD/Snm4 family. As to quaternary structure, part of the ESX-3 / type VII secretion system (T7SS), which is composed of cytosolic and membrane components. The ESX-3 membrane complex is composed of EccB3, EccC3, EccD3 and EccE3.

It is found in the cell inner membrane. Part of the ESX-3 specialized secretion system, which is required for siderophore-mediated iron acquisition and for the secretion of EsxH and EsxG. In Mycolicibacterium smegmatis (strain ATCC 700084 / mc(2)155) (Mycobacterium smegmatis), this protein is ESX-3 secretion system protein EccD3.